The following is a 541-amino-acid chain: uncharacterized protein (541 aa).

The next 5 helical transmembrane spans lie at 4–23 (FVANPLLALFVIMAVGLAIG), 30–47 (FSLGVAAVLFAGVGFAAV), 57–79 (VYILGLSIFVYSIGLESGHAFFA), 91–113 (LAITALALITGISIALFSLIHLN), and 156–178 (LVAYSLAYPIGVLGVIAAIGLCA). 2 RCK C-terminal domains span residues 187 to 271 (QEAH…VLGD) and 273 to 354 (LPGD…LFGD). 5 helical membrane passes run 362-384 (FNLFPLVAGLALGLLVGMIEVPL), 389-411 (ALSLGSAGGPLVVALVLGAVGRS), 424-446 (LALRQLGITLFLAAIGTTAGASF), 456-478 (LTIIAVGAIITLTLAIFVLVVGY), and 516-538 (LGYTSVYPLAMIAKIIAAQVVLF).

It belongs to the AAE transporter (TC 2.A.81) family.

Its subcellular location is the cell membrane. This is an uncharacterized protein from Corynebacterium diphtheriae (strain ATCC 700971 / NCTC 13129 / Biotype gravis).